A 312-amino-acid polypeptide reads, in one-letter code: Malate dehydrogenase (312 aa).

NAD(+)-binding positions include 7–13 and Asp34; that span reads GAAGGIG. Residues Arg81 and Arg87 each contribute to the substrate site. NAD(+) contacts are provided by residues Asn94 and 117-119; that span reads ITN. The substrate site is built by Asn119 and Arg153. His177 serves as the catalytic Proton acceptor. Met227 contributes to the NAD(+) binding site.

Belongs to the LDH/MDH superfamily. MDH type 1 family. In terms of assembly, homodimer.

The enzyme catalyses (S)-malate + NAD(+) = oxaloacetate + NADH + H(+). Its function is as follows. Catalyzes the reversible oxidation of malate to oxaloacetate. In Moritella marina (Vibrio marinus), this protein is Malate dehydrogenase.